The following is a 1323-amino-acid chain: ABC transporter C family member 12 (1323 aa).

The ABC transmembrane type-1 1 domain maps to His110–Gln396. The next 6 membrane-spanning stretches (helical) occupy residues Cys111 to Leu131, Met152 to Tyr172, Val227 to Leu247, Ile252 to Leu272, Ile338 to Tyr358, and Ser375 to Ile395. Positions Val428–Glu652 constitute an ABC transporter 1 domain. Gly464 to Ser471 is a binding site for ATP. A disordered region spans residues Glu657–Glu695. The span at Asp672–Gly690 shows a compositional bias: basic and acidic residues. A run of 5 helical transmembrane segments spans residues Val712–Gly732, Ile772–Phe792, Leu840–Ile860, Ile862–Ile882, and Trp952–Ile972. The region spanning Phe720–Thr1010 is the ABC transmembrane type-1 2 domain. Residues Ile1047–Asn1281 enclose the ABC transporter 2 domain. Gly1081–Ser1088 provides a ligand contact to ATP.

This sequence belongs to the ABC transporter superfamily. ABCC family. Conjugate transporter (TC 3.A.1.208) subfamily.

It is found in the membrane. In Dictyostelium discoideum (Social amoeba), this protein is ABC transporter C family member 12 (abcC12).